We begin with the raw amino-acid sequence, 448 residues long: Trigger factor (448 aa).

Residues 172 to 257 (GDRVTVDFVG…MKKIEWPHLP (86 aa)) form the PPIase FKBP-type domain.

The protein belongs to the FKBP-type PPIase family. Tig subfamily.

The protein resides in the cytoplasm. It catalyses the reaction [protein]-peptidylproline (omega=180) = [protein]-peptidylproline (omega=0). Involved in protein export. Acts as a chaperone by maintaining the newly synthesized protein in an open conformation. Functions as a peptidyl-prolyl cis-trans isomerase. The protein is Trigger factor of Paraburkholderia xenovorans (strain LB400).